A 26-amino-acid chain; its full sequence is Nicotinic acetylcholine receptor-binding protein Mnn-1A (26 aa).

A disulfide bridge connects residues Cys3 and Cys22.

The protein belongs to the three-finger toxin family. Short-chain subfamily. Expressed by the venom gland.

The protein localises to the secreted. In terms of biological role, binds and may inhibit nicotinic acetylcholine receptors (nAChR). The polypeptide is Nicotinic acetylcholine receptor-binding protein Mnn-1A (Micrurus nigrocinctus (Central American coral snake)).